The following is a 91-amino-acid chain: Ribonuclease P protein component 4 (91 aa).

The Zn(2+) site is built by C48, C51, C71, and C74.

The protein belongs to the eukaryotic/archaeal RNase P protein component 4 family. As to quaternary structure, consists of a catalytic RNA component and at least 4-5 protein subunits. The cofactor is Zn(2+).

It localises to the cytoplasm. It carries out the reaction Endonucleolytic cleavage of RNA, removing 5'-extranucleotides from tRNA precursor.. Part of ribonuclease P, a protein complex that generates mature tRNA molecules by cleaving their 5'-ends. The sequence is that of Ribonuclease P protein component 4 from Picrophilus torridus (strain ATCC 700027 / DSM 9790 / JCM 10055 / NBRC 100828 / KAW 2/3).